The sequence spans 216 residues: 3-keto-L-gulonate-6-phosphate decarboxylase UlaD (216 aa).

D11 serves as a coordination point for substrate. The Mg(2+) site is built by E33 and D62. Substrate is bound at residue R192.

It belongs to the HPS/KGPDC family. KGPDC subfamily. Homodimer. It depends on Mg(2+) as a cofactor.

It carries out the reaction 3-dehydro-L-gulonate 6-phosphate + H(+) = L-xylulose 5-phosphate + CO2. It participates in cofactor degradation; L-ascorbate degradation; D-xylulose 5-phosphate from L-ascorbate: step 2/4. In terms of biological role, catalyzes the decarboxylation of 3-keto-L-gulonate-6-P into L-xylulose-5-P. Is involved in the anaerobic L-ascorbate utilization. The protein is 3-keto-L-gulonate-6-phosphate decarboxylase UlaD of Shigella boydii serotype 18 (strain CDC 3083-94 / BS512).